Consider the following 583-residue polypeptide: Eukaryotic translation initiation factor 3 subunit D (583 aa).

The segment at 116-150 is disordered; sequence GRAQRGAGQRGGRAGFQRVGAGRGQGDRFYDNRGG. The segment covering 140–149 has biased composition (basic and acidic residues); the sequence is QGDRFYDNRG. The RNA gate stretch occupies residues 298 to 312; it reads SLDLVTVNENAIDAP. The tract at residues 561-583 is disordered; sequence NTFEEDEEAAAEEEEQKAEEDEE. Positions 563 to 583 are enriched in acidic residues; sequence FEEDEEAAAEEEEQKAEEDEE.

The protein belongs to the eIF-3 subunit D family. Component of the eukaryotic translation initiation factor 3 (eIF-3) complex.

Its subcellular location is the cytoplasm. In terms of biological role, mRNA cap-binding component of the eukaryotic translation initiation factor 3 (eIF-3) complex, which is involved in protein synthesis of a specialized repertoire of mRNAs and, together with other initiation factors, stimulates binding of mRNA and methionyl-tRNAi to the 40S ribosome. The eIF-3 complex specifically targets and initiates translation of a subset of mRNAs involved in cell proliferation. In the eIF-3 complex, eif3d specifically recognizes and binds the 7-methylguanosine cap of a subset of mRNAs. The polypeptide is Eukaryotic translation initiation factor 3 subunit D (Aspergillus oryzae (strain ATCC 42149 / RIB 40) (Yellow koji mold)).